The primary structure comprises 216 residues: MRRKNVILVIFFLIFFIGFEFSDMTLAFINLPSSYTYYVTSFDKKLPKNVTLIIPTCSLNGDIAEIKPLREGNISLLDTQYGKMIKIEAEEVGHITITSFISSEKTIDIINENITLSPILERELLSKTENKKELSMVYRVKIPVYAEFEGNSTIYVTLHVESGFKALPFFFTFTIPWEPRYGWKPYAGHKYLEVKITKKGWQLAEGEERVRLIFAV.

The helical transmembrane segment at 7–29 threads the bilayer; it reads ILVIFFLIFFIGFEFSDMTLAFI.

It is found in the membrane. This is an uncharacterized protein from Archaeoglobus fulgidus (strain ATCC 49558 / DSM 4304 / JCM 9628 / NBRC 100126 / VC-16).